Reading from the N-terminus, the 230-residue chain is Large ribosomal subunit protein uL1 (230 aa).

This sequence belongs to the universal ribosomal protein uL1 family. As to quaternary structure, part of the 50S ribosomal subunit.

Functionally, binds directly to 23S rRNA. The L1 stalk is quite mobile in the ribosome, and is involved in E site tRNA release. In terms of biological role, protein L1 is also a translational repressor protein, it controls the translation of the L11 operon by binding to its mRNA. This chain is Large ribosomal subunit protein uL1, found in Granulibacter bethesdensis (strain ATCC BAA-1260 / CGDNIH1).